We begin with the raw amino-acid sequence, 648 residues long: Chaperone protein HtpG (648 aa).

The interval 1-349 (MTTEHAAGAQ…SSDLPLNVSR (349 aa)) is a; substrate-binding. Positions 350–570 (EILQESKDID…EHDVGMNLAR (221 aa)) are b. A c region spans residues 571–648 (ILKAAGQQAP…MAMGGSAGTD (78 aa)).

This sequence belongs to the heat shock protein 90 family. As to quaternary structure, homodimer.

It is found in the cytoplasm. Functionally, molecular chaperone. Has ATPase activity. The chain is Chaperone protein HtpG from Aromatoleum aromaticum (strain DSM 19018 / LMG 30748 / EbN1) (Azoarcus sp. (strain EbN1)).